A 372-amino-acid polypeptide reads, in one-letter code: 7-methylxanthosine synthase 1 (372 aa).

Tyrosine 18 is an S-adenosyl-L-homocysteine binding site. Asparagine 21 and asparagine 25 together coordinate xanthosine. Positions 62, 67, 101, 102, 140, 141, and 157 each coordinate S-adenosyl-L-homocysteine. Tyrosine 158 contributes to the xanthosine binding site. Cysteine 159 contacts S-adenosyl-L-homocysteine. Residues glutamine 161 and tryptophan 162 each contribute to the xanthosine site. Asparagine 179, aspartate 261, phenylalanine 263, and asparagine 264 together coordinate Mg(2+). Xanthosine-binding residues include serine 316, tyrosine 321, and tyrosine 356.

The protein belongs to the methyltransferase superfamily. Type-7 methyltransferase family. The cofactor is Mg(2+). As to expression, expressed in stems, young leaves, floral buds, developing endosperm and immature fruits (grains). Detected in roots and old leaves, but not in mature fruits.

The catalysed reaction is xanthosine + S-adenosyl-L-methionine = 7-methylxanthosine + S-adenosyl-L-homocysteine. It functions in the pathway alkaloid biosynthesis. Functionally, involved in the biosynthesis of caffeine. Specific for xanthosine and could not use xanthosine 5'-monophosphate (XMP) as substrate. Catalyzes the 7-N-methylation activity of xanthosine, but does not have 1-N- or 3-N-methylation activity. The sequence is that of 7-methylxanthosine synthase 1 from Coffea arabica (Arabian coffee).